Consider the following 344-residue polypeptide: MRRLTLALDAMGGDFGPAVTVPAALQALVSYPQLELLLVGNPAAIHSLLVKTDSVLLERLTVIPAESVITSDAKPSQAIRASRGTSMRVALELIRDGRAQACVSAGNTGALMGLAKLVLKPLDGIERPALMVVLPHKKQGKTVVLDLGANVACDGAMLAQFAVMGSVMAEHIVGVTNPRVALLNIGEEETKGLDPIQHAAVLLRDVQSINYIGYLEANELLTGKTDVLVCDGFVGNVTLKTMEGVIRVFLSLLKSSGESGRQGWLMQWVKRWMKRRLMRQFGQLNPDQYNGACLIGLRGTVIKSHGAANQRAFTAAIEQAMQAVERQIPERIAARLDAVLPKSD.

It belongs to the PlsX family. Homodimer. Probably interacts with PlsY.

The protein localises to the cytoplasm. It catalyses the reaction a fatty acyl-[ACP] + phosphate = an acyl phosphate + holo-[ACP]. It functions in the pathway lipid metabolism; phospholipid metabolism. In terms of biological role, catalyzes the reversible formation of acyl-phosphate (acyl-PO(4)) from acyl-[acyl-carrier-protein] (acyl-ACP). This enzyme utilizes acyl-ACP as fatty acyl donor, but not acyl-CoA. This is Phosphate acyltransferase from Sodalis glossinidius (strain morsitans).